The primary structure comprises 102 residues: ATP-dependent Clp protease adapter protein ClpS (102 aa).

It belongs to the ClpS family. As to quaternary structure, binds to the N-terminal domain of the chaperone ClpA.

In terms of biological role, involved in the modulation of the specificity of the ClpAP-mediated ATP-dependent protein degradation. This Shewanella amazonensis (strain ATCC BAA-1098 / SB2B) protein is ATP-dependent Clp protease adapter protein ClpS.